We begin with the raw amino-acid sequence, 261 residues long: uncharacterized protein (261 aa).

Residues aspartate 43, histidine 45, aspartate 75, asparagine 106, histidine 197, and histidine 199 each contribute to the a divalent metal cation site.

The protein belongs to the metallophosphoesterase superfamily. A divalent metal cation serves as cofactor.

This is an uncharacterized protein from Aquifex aeolicus (strain VF5).